Here is a 330-residue protein sequence, read N- to C-terminus: Aspartate--ammonia ligase (330 aa).

This sequence belongs to the class-II aminoacyl-tRNA synthetase family. AsnA subfamily.

Its subcellular location is the cytoplasm. It catalyses the reaction L-aspartate + NH4(+) + ATP = L-asparagine + AMP + diphosphate + H(+). Its pathway is amino-acid biosynthesis; L-asparagine biosynthesis; L-asparagine from L-aspartate (ammonia route): step 1/1. This is Aspartate--ammonia ligase from Streptococcus pyogenes serotype M5 (strain Manfredo).